Reading from the N-terminus, the 230-residue chain is Orotidine 5'-phosphate decarboxylase (230 aa).

Residues D11, K34, 61–70, T117, R179, Q188, G208, and R209 each bind substrate; that span reads DLKLHDIPNT. K63 acts as the Proton donor in catalysis.

The protein belongs to the OMP decarboxylase family. Type 1 subfamily. In terms of assembly, homodimer.

The catalysed reaction is orotidine 5'-phosphate + H(+) = UMP + CO2. The protein operates within pyrimidine metabolism; UMP biosynthesis via de novo pathway; UMP from orotate: step 2/2. Functionally, catalyzes the decarboxylation of orotidine 5'-monophosphate (OMP) to uridine 5'-monophosphate (UMP). This is Orotidine 5'-phosphate decarboxylase from Streptococcus uberis (strain ATCC BAA-854 / 0140J).